The following is a 200-amino-acid chain: Glycerol-3-phosphate acyltransferase (200 aa).

Transmembrane regions (helical) follow at residues 3–23, 50–70, 75–95, 109–129, and 134–154; these read YIYS…FFIA, FYGA…VFLV, IKFM…SIFL, VFLA…LFIV, and YVSL…FFAG.

The protein belongs to the PlsY family. As to quaternary structure, probably interacts with PlsX.

It localises to the cell inner membrane. The catalysed reaction is an acyl phosphate + sn-glycerol 3-phosphate = a 1-acyl-sn-glycero-3-phosphate + phosphate. Its pathway is lipid metabolism; phospholipid metabolism. Catalyzes the transfer of an acyl group from acyl-phosphate (acyl-PO(4)) to glycerol-3-phosphate (G3P) to form lysophosphatidic acid (LPA). This enzyme utilizes acyl-phosphate as fatty acyl donor, but not acyl-CoA or acyl-ACP. The protein is Glycerol-3-phosphate acyltransferase of Thermosipho melanesiensis (strain DSM 12029 / CIP 104789 / BI429).